The chain runs to 143 residues: Hemoglobin subunit alpha-2 (143 aa).

The residue at position 2 (Ser-2) is an N-acetylserine. A Globin domain is found at 2–143 (SLSSKQKATV…LALALAEKYR (142 aa)). An O2-binding site is contributed by His-60. His-89 provides a ligand contact to heme b.

The protein belongs to the globin family. As to quaternary structure, hb 2 is a heterotetramer of two alpha-2 and two beta-2 chains. In terms of tissue distribution, red blood cells.

In terms of biological role, involved in oxygen transport from gills to the various peripheral tissues. The sequence is that of Hemoglobin subunit alpha-2 (hba2) from Gadus morhua (Atlantic cod).